Consider the following 306-residue polypeptide: Curved DNA-binding protein (306 aa).

The J domain occupies Asp-5–Trp-69.

The protein localises to the cytoplasm. It is found in the nucleoid. Its function is as follows. DNA-binding protein that preferentially recognizes a curved DNA sequence. It is probably a functional analog of DnaJ; displays overlapping activities with DnaJ, but functions under different conditions, probably acting as a molecular chaperone in an adaptive response to environmental stresses other than heat shock. Lacks autonomous chaperone activity; binds native substrates and targets them for recognition by DnaK. Its activity is inhibited by the binding of CbpM. This chain is Curved DNA-binding protein, found in Escherichia coli (strain 55989 / EAEC).